The primary structure comprises 286 residues: Bifunctional protein FolD (286 aa).

Residues 165-167 (GRS) and S190 each bind NADP(+).

The protein belongs to the tetrahydrofolate dehydrogenase/cyclohydrolase family. As to quaternary structure, homodimer.

It carries out the reaction (6R)-5,10-methylene-5,6,7,8-tetrahydrofolate + NADP(+) = (6R)-5,10-methenyltetrahydrofolate + NADPH. The catalysed reaction is (6R)-5,10-methenyltetrahydrofolate + H2O = (6R)-10-formyltetrahydrofolate + H(+). It participates in one-carbon metabolism; tetrahydrofolate interconversion. Catalyzes the oxidation of 5,10-methylenetetrahydrofolate to 5,10-methenyltetrahydrofolate and then the hydrolysis of 5,10-methenyltetrahydrofolate to 10-formyltetrahydrofolate. In Staphylococcus epidermidis (strain ATCC 12228 / FDA PCI 1200), this protein is Bifunctional protein FolD.